We begin with the raw amino-acid sequence, 31 residues long: Photosystem II reaction center protein T (31 aa).

The chain crosses the membrane as a helical span at residues 3 to 23; it reads ALVYTFLLIGTLGVIFFAIFF.

It belongs to the PsbT family. As to quaternary structure, PSII is composed of 1 copy each of membrane proteins PsbA, PsbB, PsbC, PsbD, PsbE, PsbF, PsbH, PsbI, PsbJ, PsbK, PsbL, PsbM, PsbT, PsbY, PsbZ, Psb30/Ycf12, at least 3 peripheral proteins of the oxygen-evolving complex and a large number of cofactors. It forms dimeric complexes.

It localises to the plastid. It is found in the chloroplast thylakoid membrane. Found at the monomer-monomer interface of the photosystem II (PS II) dimer, plays a role in assembly and dimerization of PSII. PSII is a light-driven water plastoquinone oxidoreductase, using light energy to abstract electrons from H(2)O, generating a proton gradient subsequently used for ATP formation. The polypeptide is Photosystem II reaction center protein T (Euglena gracilis).